We begin with the raw amino-acid sequence, 595 residues long: DNA mismatch repair protein MutL (595 aa).

The protein belongs to the DNA mismatch repair MutL/HexB family.

Its function is as follows. This protein is involved in the repair of mismatches in DNA. It is required for dam-dependent methyl-directed DNA mismatch repair. May act as a 'molecular matchmaker', a protein that promotes the formation of a stable complex between two or more DNA-binding proteins in an ATP-dependent manner without itself being part of a final effector complex. The polypeptide is DNA mismatch repair protein MutL (Rhodopseudomonas palustris (strain TIE-1)).